Reading from the N-terminus, the 232-residue chain is Large ribosomal subunit protein uL1 (232 aa).

Belongs to the universal ribosomal protein uL1 family. In terms of assembly, part of the 50S ribosomal subunit.

Binds directly to 23S rRNA. The L1 stalk is quite mobile in the ribosome, and is involved in E site tRNA release. In terms of biological role, protein L1 is also a translational repressor protein, it controls the translation of the L11 operon by binding to its mRNA. The protein is Large ribosomal subunit protein uL1 of Methylorubrum extorquens (strain CM4 / NCIMB 13688) (Methylobacterium extorquens).